A 688-amino-acid chain; its full sequence is G protein-coupled receptor kinase 3 (688 aa).

An N-terminal region spans residues 1-190 (MADLEAVLAD…ELNIHLTMND (190 aa)). Residues 54 to 175 (TFDKIFNQRI…MESDKFTRFC (122 aa)) form the RGS domain. In terms of domain architecture, Protein kinase spans 191-453 (FSVHRIIGRG…AQELKTHDFF (263 aa)). ATP contacts are provided by residues 197–205 (IGRGGFGEV) and K220. The active-site Proton acceptor is D317. Residues 454–521 (RGIDWQHVYL…VISERWQQEV (68 aa)) form the AGC-kinase C-terminal domain. Residues 558 to 652 (DCIVHGYMLK…WKKELTETFM (95 aa)) form the PH domain.

Belongs to the protein kinase superfamily. AGC Ser/Thr protein kinase family. GPRK subfamily. In terms of assembly, interacts with GIT1. In terms of processing, ubiquitinated. Ubiquitous; brain, spleen &gt; heart, lung &gt; kidney.

Its subcellular location is the postsynapse. It localises to the presynapse. It catalyses the reaction [beta-adrenergic receptor] + ATP = [beta-adrenergic receptor]-phosphate + ADP + H(+). Specifically phosphorylates the agonist-occupied form of the beta-adrenergic and closely related receptors. The protein is G protein-coupled receptor kinase 3 of Bos taurus (Bovine).